Reading from the N-terminus, the 42-residue chain is Proline-rich antimicrobial peptide 2 (42 aa).

In terms of tissue distribution, hemolymph.

The protein localises to the secreted. Its function is as follows. Antimicrobial protein. Has antibacterial activity against the Gram-positive bacterium M.luteus (MIC=8.6 uM). Lacks antibacterial activity against the Gram-positive bacteria B.circulans, L.monocytogenes, S.aureus, and S.lutea, and the Gram-negative bacteria E.coli D31, E.coli ATCC 25922, and S.typhimurium. Lacks antifungal activity against S.cerevisiae, P.pastoris, Z.marxianus, C.albicans, C.fructus, C.wickerhamii, A.niger, F.oxysporum, and T.harizianum. The protein is Proline-rich antimicrobial peptide 2 of Galleria mellonella (Greater wax moth).